A 93-amino-acid polypeptide reads, in one-letter code: uncharacterized protein (93 aa).

2 helical membrane-spanning segments follow: residues 7–27 and 70–90; these read LIFLGIILMFIGFFMITLGMI and ILSVLIAILMIIWMFLFAFGI.

It is found in the cell membrane. This is an uncharacterized protein from Methanocaldococcus jannaschii (strain ATCC 43067 / DSM 2661 / JAL-1 / JCM 10045 / NBRC 100440) (Methanococcus jannaschii).